The chain runs to 221 residues: PKHD-type hydroxylase Pro_1271 (221 aa).

Residues Lys80–Ser174 enclose the Fe2OG dioxygenase domain. Fe cation contacts are provided by His98, Asp100, and His155. 2-oxoglutarate is bound at residue Arg165.

Fe(2+) is required as a cofactor. It depends on L-ascorbate as a cofactor.

The polypeptide is PKHD-type hydroxylase Pro_1271 (Prochlorococcus marinus (strain SARG / CCMP1375 / SS120)).